The sequence spans 233 residues: uncharacterized protein (233 aa).

The region spanning 16 to 84 (KTLAKQVIER…TRGGTYFNDK (69 aa)) is the HTH gntR-type domain. The H-T-H motif DNA-binding region spans 44–63 (EMELMDILHVSRPVLREALS).

This is an uncharacterized protein from Bacillus subtilis (strain 168).